The sequence spans 537 residues: Cytochrome P450 4F6 (537 aa).

Cys468 provides a ligand contact to heme.

This sequence belongs to the cytochrome P450 family. Heme is required as a cofactor. High expression in liver and kidney. Lower expression in brain.

The protein localises to the endoplasmic reticulum membrane. It is found in the microsome membrane. The enzyme catalyses an organic molecule + reduced [NADPH--hemoprotein reductase] + O2 = an alcohol + oxidized [NADPH--hemoprotein reductase] + H2O + H(+). The chain is Cytochrome P450 4F6 (Cyp4f6) from Rattus norvegicus (Rat).